The primary structure comprises 172 residues: Bifunctional protein PyrR (172 aa).

The short motif at 90 to 102 is the PRPP-binding element; that stretch reads LVLVDDVLMSGRT.

This sequence belongs to the purine/pyrimidine phosphoribosyltransferase family. PyrR subfamily.

The catalysed reaction is UMP + diphosphate = 5-phospho-alpha-D-ribose 1-diphosphate + uracil. Functionally, regulates the transcription of the pyrimidine nucleotide (pyr) operon in response to exogenous pyrimidines. In terms of biological role, also displays a weak uracil phosphoribosyltransferase activity which is not physiologically significant. This chain is Bifunctional protein PyrR, found in Pseudomonas entomophila (strain L48).